A 214-amino-acid chain; its full sequence is Transmembrane emp24 domain-containing protein p24delta9 (214 aa).

Residues 1–24 (MFLRSLNLCTILLFLAISSQVSQS) form the signal peptide. The Lumenal segment spans residues 25 to 181 (LHFELQSGRT…QNLNRATNSK (157 aa)). One can recognise a GOLD domain in the interval 34–149 (TKCISEDIKS…VEVMEFDVKR (116 aa)). The stretch at 164–177 (LREREEEMQNLNRA) forms a coiled coil. R167 bears the Omega-N-methylated arginine mark. The chain crosses the membrane as a helical span at residues 182–202 (MAWLSFLSLFVCLGVAGMQFV). The Cytoplasmic portion of the chain corresponds to 203–214 (HLKTFFEKKKVI). The short motif at 207-208 (FF) is the COPII vesicle coat-binding element. The short motif at 207–214 (FFEKKKVI) is the COPI vesicle coat-binding element.

The protein belongs to the EMP24/GP25L family. In terms of assembly, probably oligomerizes with other members of the EMP24/GP25L family. Associates with the COPI vesicle coat (coatomer). Associates with the COPII vesicle coat (coatomer).

The protein resides in the endoplasmic reticulum membrane. The protein localises to the golgi apparatus. Its subcellular location is the cis-Golgi network membrane. It localises to the golgi stack membrane. In terms of biological role, involved in vesicular protein trafficking. Mainly functions in the early secretory pathway. Thought to act as cargo receptor at the lumenal side for incorporation of secretory cargo molecules into transport vesicles and to be involved in vesicle coat formation at the cytoplasmic side. The protein is Transmembrane emp24 domain-containing protein p24delta9 of Arabidopsis thaliana (Mouse-ear cress).